The sequence spans 106 residues: Large ribosomal subunit protein uL24 (106 aa).

It belongs to the universal ribosomal protein uL24 family. As to quaternary structure, part of the 50S ribosomal subunit.

Functionally, one of two assembly initiator proteins, it binds directly to the 5'-end of the 23S rRNA, where it nucleates assembly of the 50S subunit. One of the proteins that surrounds the polypeptide exit tunnel on the outside of the subunit. The chain is Large ribosomal subunit protein uL24 from Bordetella avium (strain 197N).